The primary structure comprises 542 residues: Glucans biosynthesis protein G (542 aa).

An N-terminal signal peptide occupies residues 1–34; sequence MVSLLRCPSSKPYSSLICSLTLGAVVALSGVAYA.

The protein belongs to the OpgD/OpgG family.

It localises to the periplasm. It participates in glycan metabolism; osmoregulated periplasmic glucan (OPG) biosynthesis. In terms of biological role, involved in the biosynthesis of osmoregulated periplasmic glucans (OPGs). This is Glucans biosynthesis protein G from Shewanella baltica (strain OS155 / ATCC BAA-1091).